Here is a 589-residue protein sequence, read N- to C-terminus: MKRSMYAGAVRSEHIGQELTLKGWVARRRDLGGLIFIDLRDREGIVQLVINPKTASNTVVKSAESLRSEYVIEVTGMIVERDQANDNLPTGCVEMQVTQLTILNASQTPPFEIKDKIEANDDTRLRYRYLDLRRPEMLKNFKLRAKVTHVIRNYLDDLDFIDVETPMLAKSTPEGARDYLVPSRMSRGHFYALPQSPQITKQLLMNAGFDRYYQIVKCFRDEDLRGDRQPEFTQVDLETSFLSEQEIQEITERLIACVMKEVKGIELQLPLPQISYDTAMNNYGSDKPDTRFEMTLQDLTDLVKNIDFKVFSQAPAVKAIVAKNAANSYSRKAIDKLTDIVKPFGAKGLAWVKYNDGKIGGPIAKFLTTIEDELIERLQLEANDLVFFVADDLEIANGSLGALRNHLAKELNLIDHSKFNFLWVVDWPMFEWSEEENRYTSAHHPFTLPQEDTVAELEGDLSKVRAVAYDIVLNGYELGGGSLRINQRETQERMFKALGFTKESAQKQFGFLLEAMDYGFPPHGGLALGLDRFVMLLAGKENIREVIAFPKNNKASDPMTQAPSLVSDKQLDELYLQVNKNAVKNNEQE.

Residue glutamate 174 participates in L-aspartate binding. The tract at residues 198 to 201 (QITK) is aspartate. Arginine 220 contributes to the L-aspartate binding site. ATP is bound by residues 220 to 222 (RDE) and glutamine 229. Histidine 443 provides a ligand contact to L-aspartate. Glutamate 477 contacts ATP. Residue arginine 484 participates in L-aspartate binding. An ATP-binding site is contributed by 529–532 (GLDR).

It belongs to the class-II aminoacyl-tRNA synthetase family. Type 1 subfamily. Homodimer.

It is found in the cytoplasm. The catalysed reaction is tRNA(Asp) + L-aspartate + ATP = L-aspartyl-tRNA(Asp) + AMP + diphosphate. In terms of biological role, catalyzes the attachment of L-aspartate to tRNA(Asp) in a two-step reaction: L-aspartate is first activated by ATP to form Asp-AMP and then transferred to the acceptor end of tRNA(Asp). The polypeptide is Aspartate--tRNA ligase 2 (Streptococcus mutans serotype c (strain ATCC 700610 / UA159)).